Consider the following 545-residue polypeptide: CTP synthase (545 aa).

The segment at 1 to 266 (MTTNYIFVTG…DDYICKRFSL (266 aa)) is amidoligase domain. Ser-14 provides a ligand contact to CTP. UTP is bound at residue Ser-14. ATP is bound by residues 15-20 (SLGKGI) and Asp-72. Positions 72 and 140 each coordinate Mg(2+). CTP contacts are provided by residues 147–149 (DIE), 187–192 (KTKPTQ), and Lys-223. UTP-binding positions include 187-192 (KTKPTQ) and Lys-223. 239–241 (KDV) is an ATP binding site. The Glutamine amidotransferase type-1 domain maps to 291 to 542 (TIGMVGKYIE…VKAASEFQKR (252 aa)). Gly-352 is a binding site for L-glutamine. Residue Cys-379 is the Nucleophile; for glutamine hydrolysis of the active site. L-glutamine contacts are provided by residues 380–383 (LGMQ), Glu-403, and Arg-470. Residues His-515 and Glu-517 contribute to the active site.

It belongs to the CTP synthase family. Homotetramer.

It catalyses the reaction UTP + L-glutamine + ATP + H2O = CTP + L-glutamate + ADP + phosphate + 2 H(+). The enzyme catalyses L-glutamine + H2O = L-glutamate + NH4(+). The catalysed reaction is UTP + NH4(+) + ATP = CTP + ADP + phosphate + 2 H(+). It participates in pyrimidine metabolism; CTP biosynthesis via de novo pathway; CTP from UDP: step 2/2. Allosterically activated by GTP, when glutamine is the substrate; GTP has no effect on the reaction when ammonia is the substrate. The allosteric effector GTP functions by stabilizing the protein conformation that binds the tetrahedral intermediate(s) formed during glutamine hydrolysis. Inhibited by the product CTP, via allosteric rather than competitive inhibition. Catalyzes the ATP-dependent amination of UTP to CTP with either L-glutamine or ammonia as the source of nitrogen. Regulates intracellular CTP levels through interactions with the four ribonucleotide triphosphates. This Escherichia coli O127:H6 (strain E2348/69 / EPEC) protein is CTP synthase.